A 206-amino-acid chain; its full sequence is Cytochrome c biogenesis ATP-binding export protein CcmA (206 aa).

Residues 2-206 (LEARDVVCIR…IQLTPSEGTP (205 aa)) form the ABC transporter domain. 34-41 (GANGVGKT) is a binding site for ATP.

Belongs to the ABC transporter superfamily. CcmA exporter (TC 3.A.1.107) family. The complex is composed of two ATP-binding proteins (CcmA) and two transmembrane proteins (CcmB).

It is found in the cell inner membrane. The catalysed reaction is heme b(in) + ATP + H2O = heme b(out) + ADP + phosphate + H(+). Part of the ABC transporter complex CcmAB involved in the biogenesis of c-type cytochromes; once thought to export heme, this seems not to be the case, but its exact role is uncertain. Responsible for energy coupling to the transport system. The chain is Cytochrome c biogenesis ATP-binding export protein CcmA from Pectobacterium atrosepticum (strain SCRI 1043 / ATCC BAA-672) (Erwinia carotovora subsp. atroseptica).